The following is a 183-amino-acid chain: Capsid protein (183 aa).

The interval 143–183 (LPENAVVRRRGRSPRRRTPSPRRRRSQSPRRRRSQSRGSQC) is disordered. Over residues 149 to 177 (VRRRGRSPRRRTPSPRRRRSQSPRRRRSQ) the composition is skewed to basic residues. Phosphoserine; by host occurs at positions 155, 162, and 170. One copy of the 1; half-length repeat lies at 155 to 161 (SPRRRTP). A 3 X 8 AA repeats of S-P-R-R-R-[PR]-S-Q region spans residues 155 to 177 (SPRRRTPSPRRRRSQSPRRRRSQ). Residues 158–175 (RRTPSPRRRRSQSPRRRR) carry the Bipartite nuclear localization signal motif. A run of 2 repeats spans residues 162-169 (SPRRRRSQ) and 170-177 (SPRRRRSQ). An RNA binding region spans residues 177-183 (QSRGSQC).

Belongs to the orthohepadnavirus core antigen family. Homodimerizes, then multimerizes. Interacts with cytosol exposed regions of viral L glycoprotein present in the reticulum-to-Golgi compartment. Interacts with human FLNB. Phosphorylated form interacts with host importin alpha; this interaction depends on the exposure of the NLS, which itself depends upon genome maturation and/or phosphorylation of the capsid protein. Interacts with host NUP153. Phosphorylated by host SRPK1, SRPK2, and maybe protein kinase C or GAPDH. Phosphorylation is critical for pregenomic RNA packaging. Protein kinase C phosphorylation is stimulated by HBx protein and may play a role in transport of the viral genome to the nucleus at the late step during the viral replication cycle.

It localises to the virion. The protein resides in the host cytoplasm. Self assembles to form an icosahedral capsid. Most capsids appear to be large particles with an icosahedral symmetry of T=4 and consist of 240 copies of capsid protein, though a fraction forms smaller T=3 particles consisting of 180 capsid proteins. Entering capsids are transported along microtubules to the nucleus. Phosphorylation of the capsid is thought to induce exposure of nuclear localization signal in the C-terminal portion of the capsid protein that allows binding to the nuclear pore complex via the importin (karyopherin-) alpha and beta. Capsids are imported in intact form through the nuclear pore into the nuclear basket, where it probably binds NUP153. Only capsids that contain the mature viral genome can release the viral DNA and capsid protein into the nucleoplasm. Immature capsids get stuck in the basket. Capsids encapsulate the pre-genomic RNA and the P protein. Pre-genomic RNA is reverse-transcribed into DNA while the capsid is still in the cytoplasm. The capsid can then either be directed to the nucleus, providing more genomes for transcription, or bud through the endoplasmic reticulum to provide new virions. The polypeptide is Capsid protein (Homo sapiens (Human)).